Consider the following 548-residue polypeptide: Phenylalanine--tRNA ligase beta subunit (548 aa).

Residues 275 to 350 enclose the B5 domain; that stretch reads LKEDVLETTS…IAYGYNKFSG (76 aa). Mg(2+) contacts are provided by D328, D334, E337, and E338.

This sequence belongs to the phenylalanyl-tRNA synthetase beta subunit family. Type 2 subfamily. In terms of assembly, tetramer of two alpha and two beta subunits. It depends on Mg(2+) as a cofactor.

It is found in the cytoplasm. It carries out the reaction tRNA(Phe) + L-phenylalanine + ATP = L-phenylalanyl-tRNA(Phe) + AMP + diphosphate + H(+). The protein is Phenylalanine--tRNA ligase beta subunit of Methanocaldococcus jannaschii (strain ATCC 43067 / DSM 2661 / JAL-1 / JCM 10045 / NBRC 100440) (Methanococcus jannaschii).